A 292-amino-acid polypeptide reads, in one-letter code: 11-beta-hydroxysteroid dehydrogenase 1 (292 aa).

The Cytoplasmic portion of the chain corresponds to 1 to 7 (MAFMKKY). A helical; Signal-anchor for type II membrane protein membrane pass occupies residues 8 to 24 (LLPILGLFMAYYYYSAN). Topologically, residues 25 to 292 (EEFRPEMLQG…SYNMDRFINK (268 aa)) are lumenal. NADP(+) is bound by residues 41-67 (GASK…TARS), 92-93 (TM), and 119-121 (NHI). N-linked (GlcNAc...) asparagine glycosylation is found at Asn123 and Asn162. Ser170 provides a ligand contact to substrate. The active-site Proton acceptor is the Tyr183. 183-187 (YSASK) is a binding site for NADP(+). N-linked (GlcNAc...) asparagine glycosylation occurs at Asn207. Residue 218–222 (IDTET) participates in NADP(+) binding.

The protein belongs to the short-chain dehydrogenases/reductases (SDR) family. In terms of assembly, homodimer. Post-translationally, glycosylated. As to expression, widely expressed, highest expression in liver, lower in testis, ovary, lung, foreskin fibroblasts, and much lower in kidney. Expressed in liver (at protein level). Expressed in the basal cells of the corneal epithelium and in the ciliary nonpigmented epithelium (both at mRNA and at protein level).

It is found in the endoplasmic reticulum membrane. The catalysed reaction is an 11beta-hydroxysteroid + NADP(+) = an 11-oxosteroid + NADPH + H(+). It carries out the reaction cortisone + NADPH + H(+) = cortisol + NADP(+). It catalyses the reaction corticosterone + NADP(+) = 11-dehydrocorticosterone + NADPH + H(+). The enzyme catalyses a 7beta-hydroxysteroid + NADP(+) = a 7-oxosteroid + NADPH + H(+). The catalysed reaction is 7-oxocholesterol + NADPH + H(+) = 7beta-hydroxycholesterol + NADP(+). It carries out the reaction chenodeoxycholate + NADP(+) = 7-oxolithocholate + NADPH + H(+). It catalyses the reaction 7-oxolithocholate + NADPH + H(+) = ursodeoxycholate + NADP(+). The enzyme catalyses glycochenodeoxycholate + NADP(+) = 7-oxoglycolithocholate + NADPH + H(+). The catalysed reaction is taurochenodeoxycholate + NADP(+) = 7-oxotaurolithocholate + NADPH + H(+). It carries out the reaction tauroursodeoxycholate + NADP(+) = 7-oxotaurolithocholate + NADPH + H(+). It catalyses the reaction glycoursodeoxycholate + NADP(+) = 7-oxoglycolithocholate + NADPH + H(+). The enzyme catalyses 7-oxopregnenolone + NADPH + H(+) = 7beta-hydroxypregnenolone + NADP(+). The catalysed reaction is 3beta,7alpha-dihydroxyandrost-5-en-17-one + NADP(+) = 3beta-hydroxy-5-androstene-7,17-dione + NADPH + H(+). It carries out the reaction 3beta-hydroxy-5-androstene-7,17-dione + NADPH + H(+) = 3beta,7beta-dihydroxyandrost-5-en-17-one + NADP(+). It catalyses the reaction 3beta-hydroxy-5alpha-androstane-7,17-dione + NADPH + H(+) = 3beta,7beta-dihydroxy-5alpha-androstan-17-one + NADP(+). The protein operates within steroid metabolism. Hexose-6-phosphate dehydrogenase (H6PD) provides cosubstrate NADPH, and the glucose-6-phosphate transporter in the ER-membrane supplies the substrate for H6PDH, their activities stimulate the reduction of cortisone and abolish the oxidation of cortisol. Controls the reversible conversion of biologically active glucocorticoids such as cortisone to cortisol, and 11-dehydrocorticosterone to corticosterone in the presence of NADP(H). Participates in the corticosteroid receptor-mediated anti-inflammatory response, as well as metabolic and homeostatic processes. Plays a role in the secretion of aqueous humor in the eye, maintaining a normotensive, intraocular environment. Bidirectional in vitro, predominantly functions as a reductase in vivo, thereby increasing the concentration of active glucocorticoids. It has broad substrate specificity, besides glucocorticoids, it accepts other steroid and sterol substrates. Interconverts 7-oxo- and 7-hydroxy-neurosteroids such as 7-oxopregnenolone and 7beta-hydroxypregnenolone, 7-oxodehydroepiandrosterone (3beta-hydroxy-5-androstene-7,17-dione) and 7beta-hydroxydehydroepiandrosterone (3beta,7beta-dihydroxyandrost-5-en-17-one), among others. Catalyzes the stereo-specific conversion of the major dietary oxysterol, 7-ketocholesterol (7-oxocholesterol), into the more polar 7-beta-hydroxycholesterol metabolite. 7-oxocholesterol is one of the most important oxysterols, it participates in several events such as induction of apoptosis, accumulation in atherosclerotic lesions, lipid peroxidation, and induction of foam cell formation. Mediates the 7-oxo reduction of 7-oxolithocholate mainly to chenodeoxycholate, and to a lesser extent to ursodeoxycholate, both in its free form and when conjugated to glycine or taurine, providing a link between glucocorticoid activation and bile acid metabolism. Catalyzes the synthesis of 7-beta-25-dihydroxycholesterol from 7-oxo-25-hydroxycholesterol in vitro, which acts as a ligand for the G-protein-coupled receptor (GPCR) Epstein-Barr virus-induced gene 2 (EBI2) and may thereby regulate immune cell migration. In Homo sapiens (Human), this protein is 11-beta-hydroxysteroid dehydrogenase 1.